A 32-amino-acid chain; its full sequence is Lectin (32 aa).

It belongs to the leguminous lectin family. Homotetramer.

Its function is as follows. Metalloglycoprotein, containing Ca, Mg, Mn, and Zn and the carbohydrates galactose, glucosamine, mannose, and fucose. It agglutinates erythrocytes of blood group A1. This Macrotyloma axillare (Perennial horse gram) protein is Lectin.